Here is a 378-residue protein sequence, read N- to C-terminus: 1-acyl-sn-glycerol-3-phosphate acyltransferase delta (378 aa).

Residues 11 to 31 (FLCHLVFCYVFIASGLIINTV) traverse the membrane as a helical segment. The HXXXXD motif motif lies at 96–101 (HKFEID). The next 3 membrane-spanning stretches (helical) occupy residues 125-145 (ELAY…VFCS), 307-327 (TLVN…QFLV), and 338-358 (LASF…MIGV).

This sequence belongs to the 1-acyl-sn-glycerol-3-phosphate acyltransferase family.

It localises to the endoplasmic reticulum membrane. The enzyme catalyses a 1-acyl-sn-glycero-3-phosphate + an acyl-CoA = a 1,2-diacyl-sn-glycero-3-phosphate + CoA. It catalyses the reaction (4Z,7Z,10Z,13Z,16Z,19Z)-docosahexaenoyl-CoA + 1-hexadecanoyl-sn-glycero-3-phosphate = 1-hexadecanoyl-2-(4Z,7Z,10Z,13Z,16Z,19Z-docosahexaenoyl)-sn-glycero-3-phosphate + CoA. It carries out the reaction 1-octadecanoyl-sn-glycero-3-phosphate + (9Z,12Z)-octadecadienoyl-CoA = 1-octadecanoyl-2-(9Z,12Z-octadecadienoyl)-sn-glycero-3-phosphate + CoA. The catalysed reaction is 1-octadecanoyl-sn-glycero-3-phosphate + (4Z,7Z,10Z,13Z,16Z,19Z)-docosahexaenoyl-CoA = 1-octadecanoyl-2-(4Z,7Z,10Z,13Z,16Z,19Z-docosahexaenoyl)-sn-glycero-3-phosphate + CoA. The enzyme catalyses (4Z,7Z,10Z,13Z,16Z,19Z)-docosahexaenoyl-CoA + 1-(9Z-octadecenoyl)-sn-glycero-3-phosphate = 1-(9Z-octadecenoyl)-2-(4Z,7Z,10Z,13Z,16Z,19Z-docosahexaenoyl)-sn-glycero-3-phosphate + CoA. It participates in phospholipid metabolism; CDP-diacylglycerol biosynthesis; CDP-diacylglycerol from sn-glycerol 3-phosphate: step 2/3. In terms of biological role, converts 1-acyl-sn-glycerol-3-phosphate (lysophosphatidic acid or LPA) into 1,2-diacyl-sn-glycerol-3-phosphate (phosphatidic acid or PA) by incorporating an acyl moiety at the sn-2 position of the glycerol backbone. Exhibits high acyl-CoA specificity for polyunsaturated fatty acyl-CoA, especially docosahexaenoyl-CoA (22:6-CoA, DHA-CoA). This chain is 1-acyl-sn-glycerol-3-phosphate acyltransferase delta (AGPAT4), found in Macaca fascicularis (Crab-eating macaque).